Reading from the N-terminus, the 514-residue chain is Prespore vesicle protein (514 aa).

Positions 1-18 are cleaved as a signal peptide; that stretch reads MRLYLLSLILVFYASVSS. Follistatin-like domains lie at 40 to 62 and 240 to 262; these read LCGT…YICR and TCET…AQCI. A compositionally biased stretch (polar residues) spans 285–297; the sequence is QRNAKPAQQQRSA. The disordered stretch occupies residues 285-514; sequence QRNAKPAQQQ…QARPATQKRN (230 aa). Composition is skewed to low complexity over residues 328-391, 398-413, and 424-457; these read QHNA…HTAA, AAQQ…AKPA, and AAQQ…KPAK. Residues 480-508 show a composition bias toward polar residues; it reads RIRQQNLVKQAAQKKQTSQRAASKNQARP.

The polypeptide is Prespore vesicle protein (psvA) (Dictyostelium discoideum (Social amoeba)).